The primary structure comprises 541 residues: Arginine--tRNA ligase (541 aa).

Residues 119-129 carry the 'HIGH' region motif; sequence ANPTGPLHIGH.

Belongs to the class-I aminoacyl-tRNA synthetase family. Monomer.

The protein resides in the cytoplasm. It catalyses the reaction tRNA(Arg) + L-arginine + ATP = L-arginyl-tRNA(Arg) + AMP + diphosphate. In Helicobacter acinonychis (strain Sheeba), this protein is Arginine--tRNA ligase.